Here is a 93-residue protein sequence, read N- to C-terminus: Large ribosomal subunit protein uL23cz/uL23cy (93 aa).

Belongs to the universal ribosomal protein uL23 family. Part of the 50S ribosomal subunit.

The protein resides in the plastid. It is found in the chloroplast. Its function is as follows. Binds to 23S rRNA. This chain is Large ribosomal subunit protein uL23cz/uL23cy (rpl23-A), found in Nymphaea alba (White water-lily).